We begin with the raw amino-acid sequence, 220 residues long: Uracil-DNA glycosylase (220 aa).

Asp60 acts as the Proton acceptor in catalysis.

Belongs to the uracil-DNA glycosylase (UDG) superfamily. UNG family.

The protein localises to the cytoplasm. It catalyses the reaction Hydrolyzes single-stranded DNA or mismatched double-stranded DNA and polynucleotides, releasing free uracil.. Excises uracil residues from the DNA which can arise as a result of misincorporation of dUMP residues by DNA polymerase or due to deamination of cytosine. This Francisella tularensis subsp. novicida (strain U112) protein is Uracil-DNA glycosylase.